We begin with the raw amino-acid sequence, 268 residues long: Undecaprenyl-diphosphatase (268 aa).

7 helical membrane passes run 42–62, 86–106, 108–128, 158–178, 184–204, 218–238, and 246–266; these read VPGK…ICVL, AIFV…DFIL, VLFT…AIVV, IALV…LLVG, AAEF…VVSL, LIAA…KWLV, and FTVF…YFSL.

The protein belongs to the UppP family.

The protein localises to the cell inner membrane. It catalyses the reaction di-trans,octa-cis-undecaprenyl diphosphate + H2O = di-trans,octa-cis-undecaprenyl phosphate + phosphate + H(+). Functionally, catalyzes the dephosphorylation of undecaprenyl diphosphate (UPP). Confers resistance to bacitracin. This is Undecaprenyl-diphosphatase from Parvibaculum lavamentivorans (strain DS-1 / DSM 13023 / NCIMB 13966).